Here is a 535-residue protein sequence, read N- to C-terminus: Phosphoenolpyruvate carboxykinase (ATP) (535 aa).

Residues Arg-59, Tyr-201, and Lys-207 each contribute to the substrate site. Residues Lys-207, His-226, and 243–251 (GLSGTGKTT) each bind ATP. Lys-207 and His-226 together coordinate Mn(2+). Position 264 (Asp-264) interacts with Mn(2+). ATP-binding positions include Glu-292, Arg-328, 444-445 (RI), and Thr-450. Arg-328 contacts substrate.

This sequence belongs to the phosphoenolpyruvate carboxykinase (ATP) family. The cofactor is Mn(2+).

Its subcellular location is the cytoplasm. The catalysed reaction is oxaloacetate + ATP = phosphoenolpyruvate + ADP + CO2. The protein operates within carbohydrate biosynthesis; gluconeogenesis. Functionally, involved in the gluconeogenesis. Catalyzes the conversion of oxaloacetate (OAA) to phosphoenolpyruvate (PEP) through direct phosphoryl transfer between the nucleoside triphosphate and OAA. This Bacteroides fragilis (strain ATCC 25285 / DSM 2151 / CCUG 4856 / JCM 11019 / LMG 10263 / NCTC 9343 / Onslow / VPI 2553 / EN-2) protein is Phosphoenolpyruvate carboxykinase (ATP).